The primary structure comprises 48 residues: Large ribosomal subunit protein bL36c (48 aa).

Belongs to the bacterial ribosomal protein bL36 family.

It is found in the plastid. Its subcellular location is the chloroplast. This chain is Large ribosomal subunit protein bL36c (rpl36), found in Guillardia theta (Cryptophyte).